The following is a 432-amino-acid chain: Glyceraldehyde-3-phosphate dehydrogenase, testis-specific (432 aa).

The tract at residues 1–97 (MSRRDVVLTN…PPPPPPPKPA (97 aa)) is testis-specific N-terminal extension. Positions 40 to 101 (PPPPKVEEPP…PPPKPAKELT (62 aa)) are disordered. Residues 44-55 (KVEEPPPPKEEP) are compositionally biased toward basic and acidic residues. 2 stretches are compositionally biased toward pro residues: residues 56–67 (PPPPPPPPPPQI) and 75–95 (APPP…PPPK). Residues 109–110 (RI), Asp130, Lys175, Tyr197, and Thr217 each bind NAD(+). Residues 247 to 249 (SCT), Thr278, 307 to 308 (TG), and Arg330 contribute to the D-glyceraldehyde 3-phosphate site. Catalysis depends on Cys248, which acts as the Nucleophile. The residue at position 350 (Ser350) is a Phosphoserine. An NAD(+)-binding site is contributed by Asn412.

The protein belongs to the glyceraldehyde-3-phosphate dehydrogenase family. As to quaternary structure, homotetramer. Expressed in both head and flagellum of epididymal sperm.

The protein resides in the cytoplasm. The enzyme catalyses D-glyceraldehyde 3-phosphate + phosphate + NAD(+) = (2R)-3-phospho-glyceroyl phosphate + NADH + H(+). It functions in the pathway carbohydrate degradation; glycolysis; pyruvate from D-glyceraldehyde 3-phosphate: step 1/5. Its function is as follows. May play an important role in regulating the switch between different pathways for energy production during spermiogenesis and in the spermatozoon. Required for sperm motility and male fertility. The polypeptide is Glyceraldehyde-3-phosphate dehydrogenase, testis-specific (Gapdhs) (Rattus norvegicus (Rat)).